A 65-amino-acid chain; its full sequence is Large ribosomal subunit protein bL31 (65 aa).

Positions 16, 18, 36, and 39 each coordinate Zn(2+).

This sequence belongs to the bacterial ribosomal protein bL31 family. Type A subfamily. Part of the 50S ribosomal subunit. Zn(2+) serves as cofactor.

Its function is as follows. Binds the 23S rRNA. The sequence is that of Large ribosomal subunit protein bL31 from Desulfitobacterium hafniense (strain DSM 10664 / DCB-2).